The sequence spans 743 residues: Myb-related protein B (743 aa).

The segment at 1–29 (MSRRSRGDDLEDLQYQDTDSDVPEPKENR) is disordered. Acidic residues predominate over residues 9–22 (DLEDLQYQDTDSDV). HTH myb-type domains are found at residues 26 to 77 (KENR…LRVL), 78 to 133 (HPDL…NPEV), and 134 to 184 (KKSS…KRKV). 3 consecutive DNA-binding regions (H-T-H motif) follow at residues 54–77 (WKTI…LRVL), 106–129 (WTLI…HNHL), and 157–180 (WAEI…NSTI). 2 disordered regions span residues 221–262 (VERS…SESA) and 381–406 (VTEN…TPVK).

As to quaternary structure, component of the DREAM complex.

The protein resides in the nucleus. The chain is Myb-related protein B (mybl2) from Xenopus laevis (African clawed frog).